The sequence spans 474 residues: Polyamine oxidase 7 (474 aa).

The first 27 residues, 1-27 (MTKPTTMAIFLSIVLLSMAQLPSLVAG), serve as a signal peptide directing secretion. 2 residues coordinate FAD: glutamate 61 and arginine 69. N-linked (GlcNAc...) asparagine glycans are attached at residues asparagine 103 and asparagine 150. Valine 261 contacts FAD. Asparagine 278 carries an N-linked (GlcNAc...) asparagine glycan. Glutamate 454 contributes to the FAD binding site.

Belongs to the flavin monoamine oxidase family. The cofactor is FAD.

It localises to the secreted. It is found in the extracellular space. Its subcellular location is the apoplast. It carries out the reaction spermine + O2 + H2O = 3-aminopropanal + spermidine + H2O2. It catalyses the reaction N(1)-acetylspermine + O2 + H2O = 3-acetamidopropanal + spermidine + H2O2. The catalysed reaction is norspermine + O2 + H2O = norspermidine + 3-aminopropanal + H2O2. The enzyme catalyses spermidine + O2 + H2O = 3-aminopropanal + putrescine + H2O2. It carries out the reaction N(1)-acetylspermidine + O2 + H2O = 3-acetamidopropanal + putrescine + H2O2. It catalyses the reaction thermospermine + O2 + H2O = 3-aminopropanal + spermidine + H2O2. It functions in the pathway amine and polyamine degradation; spermidine degradation. Its pathway is amine and polyamine degradation; spermine degradation. In terms of biological role, flavoenzyme involved in polyamine back-conversion. Catalyzes the oxidation of the secondary amino group of polyamines, such as spermine, spermidine and their acetyl derivatives. Substrate preference is spermine &gt; spermidine &gt; N(1)-acetylspermine &gt; N(1)-acetylspermidine &gt; norspermine &gt; thermospermine. No activity detected when putrescine is used as substrate. May play a role in producing hydrogen peroxide for secondary wall thickening through lignin formation during anther development. This chain is Polyamine oxidase 7, found in Oryza sativa subsp. japonica (Rice).